The following is a 409-amino-acid chain: NADH-quinone oxidoreductase subunit D (409 aa).

This sequence belongs to the complex I 49 kDa subunit family. As to quaternary structure, NDH-1 is composed of 14 different subunits. Subunits NuoB, C, D, E, F, and G constitute the peripheral sector of the complex.

The protein localises to the cell inner membrane. It carries out the reaction a quinone + NADH + 5 H(+)(in) = a quinol + NAD(+) + 4 H(+)(out). NDH-1 shuttles electrons from NADH, via FMN and iron-sulfur (Fe-S) centers, to quinones in the respiratory chain. The immediate electron acceptor for the enzyme in this species is believed to be ubiquinone. Couples the redox reaction to proton translocation (for every two electrons transferred, four hydrogen ions are translocated across the cytoplasmic membrane), and thus conserves the redox energy in a proton gradient. The chain is NADH-quinone oxidoreductase subunit D from Helicobacter pylori (strain P12).